A 1067-amino-acid chain; its full sequence is Tricorn protease homolog 1 (1067 aa).

Residues T518–I551 form a disordered region. A compositionally biased stretch (basic and acidic residues) spans R530–T540. H740 (charge relay system) is an active-site residue. Positions R754–E851 are PDZ-like. Residue G914 participates in substrate binding. S961 serves as the catalytic Nucleophile. Residue E1019 is the Charge relay system of the active site.

This sequence belongs to the peptidase S41B family. In terms of assembly, forms a homohexameric complex; it is not known if it assembles into higher-order structures.

It localises to the cytoplasm. Stimulated by MgCl2. Its function is as follows. Degrades oligopeptides in a sequential manner. In Streptomyces coelicolor (strain ATCC BAA-471 / A3(2) / M145), this protein is Tricorn protease homolog 1 (tri1).